The primary structure comprises 500 residues: Cysteine--tRNA ligase (500 aa).

Zn(2+) is bound at residue Cys-29. The 'HIGH' region signature appears at 31-41 (VTVYDLCHLGH). Zn(2+)-binding residues include Cys-213, His-238, and Glu-242. Residues 270 to 274 (KMSKS) carry the 'KMSKS' region motif. Lys-273 lines the ATP pocket.

The protein belongs to the class-I aminoacyl-tRNA synthetase family. Monomer. The cofactor is Zn(2+).

The protein resides in the cytoplasm. It catalyses the reaction tRNA(Cys) + L-cysteine + ATP = L-cysteinyl-tRNA(Cys) + AMP + diphosphate. In Prochlorococcus marinus (strain NATL2A), this protein is Cysteine--tRNA ligase.